A 491-amino-acid chain; its full sequence is MDLEHQTMETFLRWAAEIGISDSIDSSRFRDSCLGHSLSVSDFPDAGGRGLGAARELKKGELVLKVPRKALMTTESIIAKDLKLSDAVNLHNSLSSTQILSVCLLYEMSKEKKSFWYPYLFHIPRDYDLLATFGNFEKQALQVEDAVWATEKATAKCQSEWKEAGSLMKELELKPKFRSFQAWLWASATISSRTLHVPWDSAGCLCPVGDLFNYDAPGDYSNTPQGPESANNVEEAGLVVETHSERLTDGGFEEDVNAYCLYARRNYQLGEQVLLCYGTYTNLELLEHYGFMLEENSNDKVFIPLETSLFSLASSWPKDSLYIHQDGKLSFALISTLRLWLIPQSQRDKSVMRLVYAGSQISVKNEILVMKWMSEKCGSVLRDLPTSVTEDTVLLHNIDKLQDPELRLEQKETEAFGSEVRAFLDANCLWDVTVLSGKPIEFSRKTSRMLSKWRWSVQWRLSYKRTLADCISYCNEKMNNLLGTQDRLRDL.

Residues 36 to 278 (HSLSVSDFPD…LGEQVLLCYG (243 aa)) enclose the SET domain.

The protein belongs to the class V-like SAM-binding methyltransferase superfamily.

This chain is Protein SET DOMAIN GROUP 40 (SDG40), found in Arabidopsis thaliana (Mouse-ear cress).